Here is a 318-residue protein sequence, read N- to C-terminus: Transaldolase (318 aa).

Residue lysine 132 is the Schiff-base intermediate with substrate of the active site.

It belongs to the transaldolase family. Type 1 subfamily. Homodimer.

It is found in the cytoplasm. The catalysed reaction is D-sedoheptulose 7-phosphate + D-glyceraldehyde 3-phosphate = D-erythrose 4-phosphate + beta-D-fructose 6-phosphate. It functions in the pathway carbohydrate degradation; pentose phosphate pathway; D-glyceraldehyde 3-phosphate and beta-D-fructose 6-phosphate from D-ribose 5-phosphate and D-xylulose 5-phosphate (non-oxidative stage): step 2/3. Functionally, transaldolase is important for the balance of metabolites in the pentose-phosphate pathway. This chain is Transaldolase, found in Shewanella sp. (strain MR-4).